Here is a 38-residue protein sequence, read N- to C-terminus: Defensin D7 (38 aa).

Belongs to the DEFL family. Group IV subfamily. As to expression, distributed in the epidermal cell layer of leaves and in the subepidermal layer region of stems. Not in roots.

It localises to the secreted. It is found in the cell wall. In terms of biological role, antimicrobial peptide. Active against Fusarium spp., Gram-positive and Gram-negative bacterial pathogens. The sequence is that of Defensin D7 from Spinacia oleracea (Spinach).